We begin with the raw amino-acid sequence, 281 residues long: Nucleoid occlusion protein (281 aa).

The segment at 1 to 24 (MKHPFSRLFSFGEKEQEEMEEKQE) is disordered. Residues 145–164 (EALAQRLGKGQSTIANKLRL) constitute a DNA-binding region (H-T-H motif).

The protein belongs to the ParB family.

It is found in the cytoplasm. It localises to the nucleoid. Functionally, effects nucleoid occlusion by binding relatively nonspecifically to DNA and preventing the assembly of the division machinery in the vicinity of the nucleoid, especially under conditions that disturb the cell cycle. It helps to coordinate cell division and chromosome segregation by preventing the formation of the Z ring through the nucleoid, which would cause chromosome breakage. The protein is Nucleoid occlusion protein of Geobacillus kaustophilus (strain HTA426).